The following is a 375-amino-acid chain: Succinyl-diaminopimelate desuccinylase (375 aa).

Histidine 66 is a Zn(2+) binding site. Residue aspartate 68 is part of the active site. A Zn(2+)-binding site is contributed by aspartate 99. Glutamate 133 serves as the catalytic Proton acceptor. Residues glutamate 134, glutamate 162, and histidine 348 each contribute to the Zn(2+) site.

Belongs to the peptidase M20A family. DapE subfamily. In terms of assembly, homodimer. Zn(2+) serves as cofactor. It depends on Co(2+) as a cofactor.

The enzyme catalyses N-succinyl-(2S,6S)-2,6-diaminopimelate + H2O = (2S,6S)-2,6-diaminopimelate + succinate. The protein operates within amino-acid biosynthesis; L-lysine biosynthesis via DAP pathway; LL-2,6-diaminopimelate from (S)-tetrahydrodipicolinate (succinylase route): step 3/3. Functionally, catalyzes the hydrolysis of N-succinyl-L,L-diaminopimelic acid (SDAP), forming succinate and LL-2,6-diaminopimelate (DAP), an intermediate involved in the bacterial biosynthesis of lysine and meso-diaminopimelic acid, an essential component of bacterial cell walls. The chain is Succinyl-diaminopimelate desuccinylase from Yersinia pseudotuberculosis serotype O:1b (strain IP 31758).